The primary structure comprises 215 residues: Large ribosomal subunit protein uL4 (215 aa).

The tract at residues 46–72 (TAKSKNRAEVSGGGRKPWAQKGGGRAR) is disordered. Over residues 56–71 (SGGGRKPWAQKGGGRA) the composition is skewed to gly residues.

The protein belongs to the universal ribosomal protein uL4 family. As to quaternary structure, part of the 50S ribosomal subunit.

One of the primary rRNA binding proteins, this protein initially binds near the 5'-end of the 23S rRNA. It is important during the early stages of 50S assembly. It makes multiple contacts with different domains of the 23S rRNA in the assembled 50S subunit and ribosome. Functionally, forms part of the polypeptide exit tunnel. This chain is Large ribosomal subunit protein uL4, found in Helicobacter pylori (strain Shi470).